The primary structure comprises 278 residues: MTTRIDTRFAELKKQGRSAFVTFVMAGDPDLATSLQVLKALPAAGADIIEIGMPFTDPMADGPAIQAAGLRALHSGATLSHTLGLVRDFRKDDDTTPMVLMGYYNPIYIYGVDAFLADAKAAGVDGLIIVDLPPEEDSELCLPAMKAGLNFIRLATPTTDEKRLPAVLANTSGFVYYVSITGITGSASADSAAVGDAVARIKRHTDLPVCVGFGIRTPEAARAIAAEADGAVVGSALIDALQKSLDADNRATKATVGAVADLVASLAAGVRGAKQAAE.

Catalysis depends on proton acceptor residues Glu-50 and Asp-61.

The protein belongs to the TrpA family. Tetramer of two alpha and two beta chains.

The catalysed reaction is (1S,2R)-1-C-(indol-3-yl)glycerol 3-phosphate + L-serine = D-glyceraldehyde 3-phosphate + L-tryptophan + H2O. It functions in the pathway amino-acid biosynthesis; L-tryptophan biosynthesis; L-tryptophan from chorismate: step 5/5. In terms of biological role, the alpha subunit is responsible for the aldol cleavage of indoleglycerol phosphate to indole and glyceraldehyde 3-phosphate. The sequence is that of Tryptophan synthase alpha chain from Rhodopseudomonas palustris (strain BisB5).